An 89-amino-acid polypeptide reads, in one-letter code: Small ribosomal subunit protein uS15 (89 aa).

Belongs to the universal ribosomal protein uS15 family. Part of the 30S ribosomal subunit. Forms a bridge to the 50S subunit in the 70S ribosome, contacting the 23S rRNA.

Functionally, one of the primary rRNA binding proteins, it binds directly to 16S rRNA where it helps nucleate assembly of the platform of the 30S subunit by binding and bridging several RNA helices of the 16S rRNA. Forms an intersubunit bridge (bridge B4) with the 23S rRNA of the 50S subunit in the ribosome. The protein is Small ribosomal subunit protein uS15 of Pectobacterium carotovorum subsp. carotovorum (strain PC1).